The primary structure comprises 457 residues: tRNA-2-methylthio-N(6)-dimethylallyladenosine synthase (457 aa).

The MTTase N-terminal domain occupies 3–120 (KKVYVKTFGC…LPQMIDARRA (118 aa)). The [4Fe-4S] cluster site is built by Cys-12, Cys-49, Cys-83, Cys-157, Cys-161, and Cys-164. The Radical SAM core domain occupies 143–377 (RVEGPSAFVS…QATIEENVAR (235 aa)). The 68-residue stretch at 380 to 447 (QSMVGKVERI…PHSLRGELVL (68 aa)) folds into the TRAM domain.

It belongs to the methylthiotransferase family. MiaB subfamily. In terms of assembly, monomer. It depends on [4Fe-4S] cluster as a cofactor.

Its subcellular location is the cytoplasm. It carries out the reaction N(6)-dimethylallyladenosine(37) in tRNA + (sulfur carrier)-SH + AH2 + 2 S-adenosyl-L-methionine = 2-methylsulfanyl-N(6)-dimethylallyladenosine(37) in tRNA + (sulfur carrier)-H + 5'-deoxyadenosine + L-methionine + A + S-adenosyl-L-homocysteine + 2 H(+). Its function is as follows. Catalyzes the methylthiolation of N6-(dimethylallyl)adenosine (i(6)A), leading to the formation of 2-methylthio-N6-(dimethylallyl)adenosine (ms(2)i(6)A) at position 37 in tRNAs that read codons beginning with uridine. This is tRNA-2-methylthio-N(6)-dimethylallyladenosine synthase from Burkholderia cenocepacia (strain HI2424).